Consider the following 477-residue polypeptide: 3-isopropylmalate dehydratase large subunit 1 (477 aa).

Cysteine 357, cysteine 417, and cysteine 420 together coordinate [4Fe-4S] cluster.

The protein belongs to the aconitase/IPM isomerase family. LeuC type 1 subfamily. In terms of assembly, heterodimer of LeuC and LeuD. [4Fe-4S] cluster serves as cofactor.

The enzyme catalyses (2R,3S)-3-isopropylmalate = (2S)-2-isopropylmalate. It participates in amino-acid biosynthesis; L-leucine biosynthesis; L-leucine from 3-methyl-2-oxobutanoate: step 2/4. Its function is as follows. Catalyzes the isomerization between 2-isopropylmalate and 3-isopropylmalate, via the formation of 2-isopropylmaleate. The protein is 3-isopropylmalate dehydratase large subunit 1 of Bradyrhizobium diazoefficiens (strain JCM 10833 / BCRC 13528 / IAM 13628 / NBRC 14792 / USDA 110).